A 301-amino-acid polypeptide reads, in one-letter code: Ubiquitin thioesterase OTU1 (301 aa).

The segment at 4–80 (KVTGAGINQV…TIESSDSNES (77 aa)) is UBX-like. Residues 109-229 (LSVHPVLDDN…GIHYDSLTMN (121 aa)) enclose the OTU domain. A cys-loop region spans residues 114 to 120 (VLDDNSC). The active site involves Asp-117. The active-site Nucleophile is Cys-120. Lys-160 is covalently cross-linked (Glycyl lysine isopeptide (Lys-Gly) (interchain with G-Cter in ubiquitin)). Residues 169-179 (ILKMESWGGAI) are variable-loop. The segment at 218–222 (FNGIH) is his-loop. Ile-221 contributes to the substrate binding site. Residue His-222 is part of the active site. Residues 243–248 (DDVLTA) are S2 site. The C2H2-type zinc-finger motif lies at 270-294 (IKCNTCQMTFVGEREVARHAESTGH). His-294 is a catalytic residue.

In terms of assembly, forms a complex composed of CDC48, NPL4, UFD1, DOA1, SHP1 and deubiquitinase OTU1; within the complex interacts with CDC48 and DOA1/UFD3.

The protein localises to the cytoplasm. The protein resides in the nucleus. The enzyme catalyses Thiol-dependent hydrolysis of ester, thioester, amide, peptide and isopeptide bonds formed by the C-terminal Gly of ubiquitin (a 76-residue protein attached to proteins as an intracellular targeting signal).. In terms of biological role, hydrolase that can remove conjugated ubiquitin from proteins and may therefore play an important regulatory role at the level of protein turnover by preventing degradation. Participates in the regulation of the ubiquitin conjugation pathway involving CDC48 by hindering multiubiquitination of substrates at the CDC48 chaperone. May be indirectly involved in PIS1 gene expression. In Saccharomyces cerevisiae (strain ATCC 204508 / S288c) (Baker's yeast), this protein is Ubiquitin thioesterase OTU1 (OTU1).